We begin with the raw amino-acid sequence, 376 residues long: N-acetyldiaminopimelate deacetylase (376 aa).

Residue Asp69 is part of the active site. Glu128 acts as the Proton acceptor in catalysis.

Belongs to the peptidase M20A family. N-acetyldiaminopimelate deacetylase subfamily.

It catalyses the reaction N-acetyl-(2S,6S)-2,6-diaminopimelate + H2O = (2S,6S)-2,6-diaminopimelate + acetate. It participates in amino-acid biosynthesis; L-lysine biosynthesis via DAP pathway; LL-2,6-diaminopimelate from (S)-tetrahydrodipicolinate (acetylase route): step 3/3. Functionally, catalyzes the conversion of N-acetyl-diaminopimelate to diaminopimelate and acetate. The polypeptide is N-acetyldiaminopimelate deacetylase (Bacillus anthracis (strain A0248)).